The chain runs to 253 residues: 3-deoxy-manno-octulosonate cytidylyltransferase (253 aa).

Belongs to the KdsB family.

The protein resides in the cytoplasm. It carries out the reaction 3-deoxy-alpha-D-manno-oct-2-ulosonate + CTP = CMP-3-deoxy-beta-D-manno-octulosonate + diphosphate. The protein operates within nucleotide-sugar biosynthesis; CMP-3-deoxy-D-manno-octulosonate biosynthesis; CMP-3-deoxy-D-manno-octulosonate from 3-deoxy-D-manno-octulosonate and CTP: step 1/1. It participates in bacterial outer membrane biogenesis; lipopolysaccharide biosynthesis. Functionally, activates KDO (a required 8-carbon sugar) for incorporation into bacterial lipopolysaccharide in Gram-negative bacteria. This Neisseria meningitidis serogroup A / serotype 4A (strain DSM 15465 / Z2491) protein is 3-deoxy-manno-octulosonate cytidylyltransferase.